Reading from the N-terminus, the 99-residue chain is Aspartyl/glutamyl-tRNA(Asn/Gln) amidotransferase subunit C (99 aa).

The protein belongs to the GatC family. Heterotrimer of A, B and C subunits.

It carries out the reaction L-glutamyl-tRNA(Gln) + L-glutamine + ATP + H2O = L-glutaminyl-tRNA(Gln) + L-glutamate + ADP + phosphate + H(+). The catalysed reaction is L-aspartyl-tRNA(Asn) + L-glutamine + ATP + H2O = L-asparaginyl-tRNA(Asn) + L-glutamate + ADP + phosphate + 2 H(+). In terms of biological role, allows the formation of correctly charged Asn-tRNA(Asn) or Gln-tRNA(Gln) through the transamidation of misacylated Asp-tRNA(Asn) or Glu-tRNA(Gln) in organisms which lack either or both of asparaginyl-tRNA or glutaminyl-tRNA synthetases. The reaction takes place in the presence of glutamine and ATP through an activated phospho-Asp-tRNA(Asn) or phospho-Glu-tRNA(Gln). The protein is Aspartyl/glutamyl-tRNA(Asn/Gln) amidotransferase subunit C of Sulfurihydrogenibium sp. (strain YO3AOP1).